The chain runs to 314 residues: Olfactory receptor 1C1 (314 aa).

Residues 1-25 are Extracellular-facing; it reads MEKRNLTVVREFVLLGLPSSAEQQH. Residues 26 to 49 form a helical membrane-spanning segment; the sequence is LLSVLFLCMYLATTLGNMLIIATI. Residues 50-57 lie on the Cytoplasmic side of the membrane; the sequence is GFDSHLHS. The chain crosses the membrane as a helical span at residues 58-79; that stretch reads PMYFFLSNLAFVDICFTSTTVP. At 80-100 the chain is on the extracellular side; the sequence is QMVVNILTGTKTISFAGCLTQ. Cysteine 97 and cysteine 189 are oxidised to a cystine. Residues 101–120 traverse the membrane as a helical segment; the sequence is LFFFVSFVNMDSLLLCVMAY. At 121–139 the chain is on the cytoplasmic side; the sequence is DRYVAICHPLHYTARMNLC. Residues 140–158 form a helical membrane-spanning segment; sequence LCVQLVAGLWLVTYLHALL. Residues 159-195 are Extracellular-facing; that stretch reads HTVLIAQLSFCASNIIHHFFCDLNPLLQLSCSDVSFN. Residues 196 to 219 form a helical membrane-spanning segment; the sequence is VMIIFAVGGLLALTPLVCILVSYG. The Cytoplasmic segment spans residues 220 to 236; that stretch reads LIFSTVLKITSTQGKQR. Residues 237–259 form a helical membrane-spanning segment; that stretch reads AVSTCSCHLSVVVLFYGTAIAVY. Residues 260-272 are Extracellular-facing; sequence FSPSSPHMPESDT. Residues 273 to 292 form a helical membrane-spanning segment; the sequence is LSTIMYSMVAPMLNPFIYTL. At 293–314 the chain is on the cytoplasmic side; sequence RNRDMKRGLQKMLLKCTVFQQQ.

It belongs to the G-protein coupled receptor 1 family.

It is found in the cell membrane. In terms of biological role, odorant receptor. This is Olfactory receptor 1C1 (OR1C1) from Homo sapiens (Human).